The primary structure comprises 488 residues: Germacrene A hydroxylase (488 aa).

Topologically, residues 1–6 (MEVSLT) are cytoplasmic. A helical; Signal-anchor for type II membrane protein transmembrane segment spans residues 7–23 (TSIALATIVFFLYKLLT). Residues 24–488 (RPTSSKNRLP…KTELMLVPSF (465 aa)) lie on the Lumenal side of the membrane. Asn169, Asn260, Asn379, and Asn412 each carry an N-linked (GlcNAc...) asparagine glycan. Cys432 contributes to the heme binding site.

The protein belongs to the cytochrome P450 family. Requires heme as cofactor. Expressed in leaf primordia.

The protein localises to the endoplasmic reticulum membrane. It catalyses the reaction (+)-(R)-germacrene A + 3 reduced [NADPH--hemoprotein reductase] + 3 O2 = germacra-1(10),4,11(13)-trien-12-oate + 3 oxidized [NADPH--hemoprotein reductase] + 4 H2O + 4 H(+). The protein operates within secondary metabolite biosynthesis; terpenoid biosynthesis. Its function is as follows. Involved in the biosynthesis of germacrene-derived sesquiterpene lactones. Catalyzes three consecutive oxidations of germacrene A to produce germacrene A acid. Could also catalyze the three-step oxidation of non-natural substrate amorphadiene to artemisinic acid. The sequence is that of Germacrene A hydroxylase from Helianthus annuus (Common sunflower).